Reading from the N-terminus, the 743-residue chain is Peptide transporter family 1 (743 aa).

Positions 1-28 are disordered; that stretch reads MASEITNGKNGQNGKNGQKEESDSQIAP. A compositionally biased stretch (low complexity) spans 7–16; the sequence is NGKNGQNGKN. Helical transmembrane passes span 74 to 94, 104 to 124, 132 to 152, 173 to 193, 207 to 227, 334 to 354, 364 to 384, 597 to 619, 629 to 649, and 659 to 679; these read VLFHTFTMLVYIFPLIGALIA, ILYLSLVYSLGAMVVSFGAVP, AVTVVGLLLIAIGTGGIKPCV, FSLFYFAINAGSLISTTFTPI, FSLAFGVPAILMIFSVIIFMA, VVNPLLILGFLPLFDYIIYPA, LQKLTLGLLLAALGFFLSAGL, LPQIVVMTAAEVMFSVTGLEFSY, VLQACWLLSVAIGNMLVVVIA, and GEFTLFASLMLVDMMIFLWLA.

Belongs to the major facilitator superfamily. Proton-dependent oligopeptide transporter (POT/PTR) (TC 2.A.17) family. Expressed in thorax and abdomen of females: apical epithelial membranes of midgut, rectum, and reproductive tract. Also expressed in neuropil of the central nervous system, with elevated expression within the alpha- and beta-lobes of the mushroom bodies.

The protein localises to the membrane. Functionally, important role in absorption of dietary peptides. High-affinity transporter of alanylalanine. Dipeptide transport activity is proton dependent. The polypeptide is Peptide transporter family 1 (yin) (Drosophila melanogaster (Fruit fly)).